A 114-amino-acid chain; its full sequence is Large ribosomal subunit protein bL19 (114 aa).

Belongs to the bacterial ribosomal protein bL19 family.

Its function is as follows. This protein is located at the 30S-50S ribosomal subunit interface and may play a role in the structure and function of the aminoacyl-tRNA binding site. The sequence is that of Large ribosomal subunit protein bL19 (rplS) from Listeria monocytogenes serovar 1/2a (strain ATCC BAA-679 / EGD-e).